Reading from the N-terminus, the 127-residue chain is NADPH-dependent 7-cyano-7-deazaguanine reductase (127 aa).

C40 serves as the catalytic Thioimide intermediate. D47 (proton donor) is an active-site residue. Substrate contacts are provided by residues 62–64 (VEL) and 81–82 (HE).

It belongs to the GTP cyclohydrolase I family. QueF type 1 subfamily.

Its subcellular location is the cytoplasm. The enzyme catalyses 7-aminomethyl-7-carbaguanine + 2 NADP(+) = 7-cyano-7-deazaguanine + 2 NADPH + 3 H(+). Its pathway is tRNA modification; tRNA-queuosine biosynthesis. Functionally, catalyzes the NADPH-dependent reduction of 7-cyano-7-deazaguanine (preQ0) to 7-aminomethyl-7-deazaguanine (preQ1). The protein is NADPH-dependent 7-cyano-7-deazaguanine reductase of Campylobacter jejuni subsp. jejuni serotype O:6 (strain 81116 / NCTC 11828).